The primary structure comprises 365 residues: UDP-N-acetylglucosamine--N-acetylmuramyl-(pentapeptide) pyrophosphoryl-undecaprenol N-acetylglucosamine transferase (365 aa).

UDP-N-acetyl-alpha-D-glucosamine contacts are provided by residues 11–13 (TGG), Asn-124, Arg-165, Ser-192, Ile-246, and Gln-291.

The protein belongs to the glycosyltransferase 28 family. MurG subfamily.

It localises to the cell inner membrane. It carries out the reaction di-trans,octa-cis-undecaprenyl diphospho-N-acetyl-alpha-D-muramoyl-L-alanyl-D-glutamyl-meso-2,6-diaminopimeloyl-D-alanyl-D-alanine + UDP-N-acetyl-alpha-D-glucosamine = di-trans,octa-cis-undecaprenyl diphospho-[N-acetyl-alpha-D-glucosaminyl-(1-&gt;4)]-N-acetyl-alpha-D-muramoyl-L-alanyl-D-glutamyl-meso-2,6-diaminopimeloyl-D-alanyl-D-alanine + UDP + H(+). Its pathway is cell wall biogenesis; peptidoglycan biosynthesis. In terms of biological role, cell wall formation. Catalyzes the transfer of a GlcNAc subunit on undecaprenyl-pyrophosphoryl-MurNAc-pentapeptide (lipid intermediate I) to form undecaprenyl-pyrophosphoryl-MurNAc-(pentapeptide)GlcNAc (lipid intermediate II). The sequence is that of UDP-N-acetylglucosamine--N-acetylmuramyl-(pentapeptide) pyrophosphoryl-undecaprenol N-acetylglucosamine transferase from Nitratidesulfovibrio vulgaris (strain DP4) (Desulfovibrio vulgaris).